Consider the following 359-residue polypeptide: 3-dehydroquinate synthase (359 aa).

Residues 71–76, 105–109, 129–130, Lys-142, Lys-151, and 169–172 contribute to the NAD(+) site; these read DGEAHK, GVIGD, TT, and TLHT. Glu-184, His-247, and His-264 together coordinate Zn(2+).

It belongs to the sugar phosphate cyclases superfamily. Dehydroquinate synthase family. Co(2+) is required as a cofactor. Requires Zn(2+) as cofactor. It depends on NAD(+) as a cofactor.

It is found in the cytoplasm. The enzyme catalyses 7-phospho-2-dehydro-3-deoxy-D-arabino-heptonate = 3-dehydroquinate + phosphate. The protein operates within metabolic intermediate biosynthesis; chorismate biosynthesis; chorismate from D-erythrose 4-phosphate and phosphoenolpyruvate: step 2/7. Functionally, catalyzes the conversion of 3-deoxy-D-arabino-heptulosonate 7-phosphate (DAHP) to dehydroquinate (DHQ). This is 3-dehydroquinate synthase from Neisseria meningitidis serogroup C (strain 053442).